A 388-amino-acid chain; its full sequence is Ferrochelatase (388 aa).

Residues His-197 and Glu-278 each coordinate Fe cation.

Belongs to the ferrochelatase family.

Its subcellular location is the cytoplasm. The enzyme catalyses heme b + 2 H(+) = protoporphyrin IX + Fe(2+). It functions in the pathway porphyrin-containing compound metabolism; protoheme biosynthesis; protoheme from protoporphyrin-IX: step 1/1. In terms of biological role, catalyzes the ferrous insertion into protoporphyrin IX. The polypeptide is Ferrochelatase (Thermosynechococcus vestitus (strain NIES-2133 / IAM M-273 / BP-1)).